The following is a 282-amino-acid chain: Formamidopyrimidine-DNA glycosylase (282 aa).

Proline 2 (schiff-base intermediate with DNA) is an active-site residue. Glutamate 3 serves as the catalytic Proton donor. The active-site Proton donor; for beta-elimination activity is lysine 59. DNA-binding residues include histidine 97 and arginine 116. Residues 246–280 (WVYGRKDQPCRTCGTPIQKLKLAGRSSHFCPRCQP) form an FPG-type zinc finger. Catalysis depends on arginine 270, which acts as the Proton donor; for delta-elimination activity.

This sequence belongs to the FPG family. Monomer. Zn(2+) serves as cofactor.

The enzyme catalyses Hydrolysis of DNA containing ring-opened 7-methylguanine residues, releasing 2,6-diamino-4-hydroxy-5-(N-methyl)formamidopyrimidine.. It catalyses the reaction 2'-deoxyribonucleotide-(2'-deoxyribose 5'-phosphate)-2'-deoxyribonucleotide-DNA = a 3'-end 2'-deoxyribonucleotide-(2,3-dehydro-2,3-deoxyribose 5'-phosphate)-DNA + a 5'-end 5'-phospho-2'-deoxyribonucleoside-DNA + H(+). Its function is as follows. Involved in base excision repair of DNA damaged by oxidation or by mutagenic agents. Acts as a DNA glycosylase that recognizes and removes damaged bases. Has a preference for oxidized purines, such as 7,8-dihydro-8-oxoguanine (8-oxoG). Has AP (apurinic/apyrimidinic) lyase activity and introduces nicks in the DNA strand. Cleaves the DNA backbone by beta-delta elimination to generate a single-strand break at the site of the removed base with both 3'- and 5'-phosphates. This chain is Formamidopyrimidine-DNA glycosylase (mutM), found in Synechococcus sp. (strain ATCC 27144 / PCC 6301 / SAUG 1402/1) (Anacystis nidulans).